We begin with the raw amino-acid sequence, 351 residues long: N-acetyl-gamma-glutamyl-phosphate reductase (351 aa).

Residue C154 is part of the active site.

Belongs to the NAGSA dehydrogenase family. Type 1 subfamily.

It is found in the cytoplasm. The enzyme catalyses N-acetyl-L-glutamate 5-semialdehyde + phosphate + NADP(+) = N-acetyl-L-glutamyl 5-phosphate + NADPH + H(+). It participates in amino-acid biosynthesis; L-arginine biosynthesis; N(2)-acetyl-L-ornithine from L-glutamate: step 3/4. Catalyzes the NADPH-dependent reduction of N-acetyl-5-glutamyl phosphate to yield N-acetyl-L-glutamate 5-semialdehyde. This chain is N-acetyl-gamma-glutamyl-phosphate reductase, found in Prochlorococcus marinus (strain MIT 9515).